Reading from the N-terminus, the 892-residue chain is Protein argonaute 11 (892 aa).

Gly residues predominate over residues 1-17 (MSSRGGGVGGRRGGPGG). Disordered regions lie at residues 1-68 (MSSR…ALQP) and 86-117 (MEAR…GALP). Residues 86–107 (MEAREGASSSSSASAPAVGEVE) show a composition bias toward low complexity. The region spanning 248 to 362 (SLKQFLAGTY…LPMEVCRIVK (115 aa)) is the PAZ domain. The 308-residue stretch at 541-848 (LLVIVLPDAN…AASRARHYLE (308 aa)) folds into the Piwi domain. Residues 850–876 (GSLPDHGSSSASAAGGSRRNDRGVPVK) are disordered. Over residues 856 to 866 (GSSSASAAGGS) the composition is skewed to low complexity. Over residues 867-876 (RRNDRGVPVK) the composition is skewed to basic and acidic residues.

The protein belongs to the argonaute family. Ago subfamily.

In terms of biological role, probably involved in the RNA silencing pathway. May bind to short RNAs such as microRNAs (miRNAs) or short interfering RNAs (siRNAs), and represses the translation of mRNAs which are complementary to them. The polypeptide is Protein argonaute 11 (AGO11) (Oryza sativa subsp. japonica (Rice)).